The chain runs to 294 residues: Probable aspartoacylase (294 aa).

Zn(2+)-binding residues include His14 and Glu17. Residues Arg56 and 63–64 contribute to the substrate site; that span reads NR. A Zn(2+)-binding site is contributed by His106. Residues Glu164 and Tyr275 each coordinate substrate.

It belongs to the AspA/AstE family. Aspartoacylase subfamily. Zn(2+) is required as a cofactor.

The enzyme catalyses an N-acyl-L-aspartate + H2O = a carboxylate + L-aspartate. In Nostoc sp. (strain PCC 7120 / SAG 25.82 / UTEX 2576), this protein is Probable aspartoacylase.